The chain runs to 398 residues: Enoyl-[acyl-carrier-protein] reductase [NADH] (398 aa).

NAD(+) is bound by residues 48–53 (GSSTGY), 74–75 (FE), 111–112 (DA), and 139–140 (LA). Tyrosine 225 is a substrate binding site. The Proton donor role is filled by tyrosine 235. Residues lysine 244 and 273 to 275 (VVT) contribute to the NAD(+) site.

This sequence belongs to the TER reductase family. In terms of assembly, monomer.

It carries out the reaction a 2,3-saturated acyl-[ACP] + NAD(+) = a (2E)-enoyl-[ACP] + NADH + H(+). The protein operates within lipid metabolism; fatty acid biosynthesis. In terms of biological role, involved in the final reduction of the elongation cycle of fatty acid synthesis (FAS II). Catalyzes the reduction of a carbon-carbon double bond in an enoyl moiety that is covalently linked to an acyl carrier protein (ACP). The protein is Enoyl-[acyl-carrier-protein] reductase [NADH] of Pseudomonas aeruginosa (strain UCBPP-PA14).